Consider the following 151-residue polypeptide: Ribosome maturation factor RimP (151 aa).

Belongs to the RimP family.

It is found in the cytoplasm. Functionally, required for maturation of 30S ribosomal subunits. The sequence is that of Ribosome maturation factor RimP from Endomicrobium trichonymphae.